The following is a 130-amino-acid chain: Histone H2A.1 (130 aa).

Positions Met-1 to Ala-22 are disordered. N-acetylserine is present on Ser-2. Lys-5 and Lys-7 each carry N6-acetyllysine. Gln-105 carries the N5-methylglutamine modification. Ser-127 is modified (phosphoserine). The [ST]-Q motif signature appears at Ser-127–Gln-128.

The protein belongs to the histone H2A family. As to quaternary structure, the nucleosome is a histone octamer containing two molecules each of H2A, H2B, H3 and H4 assembled in one H3-H4 heterotetramer and two H2A-H2B heterodimers. The octamer wraps approximately 147 bp of DNA. Phosphorylated to form H2AS128ph (gamma-H2A) in response to DNA double-strand breaks (DSBs) generated by exogenous genotoxic agents and by stalled replication forks. Phosphorylation is dependent on the DNA damage checkpoint kinases MEC1/ATR and TEL1/ATM, spreads on either side of a detected DSB site and may mark the surrounding chromatin for recruitment of proteins required for DNA damage signaling and repair. Gamma-H2A is removed from the DNA prior to the strand invasion-primer extension step of the repair process and subsequently dephosphorylated. Dephosphorylation is necessary for efficient recovery from the DNA damage checkpoint. In terms of processing, acetylated by ESA1 to form H2AK4ac and H2AK7ac.

Its subcellular location is the nucleus. It localises to the chromosome. Functionally, core component of nucleosome which plays a central role in DNA double strand break (DSB) repair. Nucleosomes wrap and compact DNA into chromatin, limiting DNA accessibility to the cellular machineries which require DNA as a template. Histones thereby play a central role in transcription regulation, DNA repair, DNA replication and chromosomal stability. DNA accessibility is regulated via a complex set of post-translational modifications of histones, also called histone code, and nucleosome remodeling. This is Histone H2A.1 (HTA1) from Lodderomyces elongisporus (strain ATCC 11503 / CBS 2605 / JCM 1781 / NBRC 1676 / NRRL YB-4239) (Yeast).